The chain runs to 226 residues: Molybdenum transport system permease protein ModB (226 aa).

One can recognise an ABC transmembrane type-1 domain in the interval 11-217 (IRLTLELASL…SFLVLFALYS (207 aa)). Transmembrane regions (helical) follow at residues 17–37 (LASL…WWLA), 47–67 (IGAV…FYLL), 88–108 (LPFT…PFVV), 150–170 (ITAA…VLMI), and 197–217 (AHWL…ALYS).

Belongs to the binding-protein-dependent transport system permease family. CysTW subfamily.

It localises to the cell inner membrane. Its function is as follows. Part of the binding-protein-dependent transport system for molybdenum; probably responsible for the translocation of the substrate across the membrane. In Azotobacter vinelandii, this protein is Molybdenum transport system permease protein ModB (modB).